We begin with the raw amino-acid sequence, 32 residues long: Photosystem I reaction center subunit XII (32 aa).

The helical transmembrane segment at 9-28 (VYIALVVALIPGLLAWRLAT) threads the bilayer.

Belongs to the PsaM family.

It is found in the cellular thylakoid membrane. The polypeptide is Photosystem I reaction center subunit XII (Nostoc sp. (strain PCC 7120 / SAG 25.82 / UTEX 2576)).